Reading from the N-terminus, the 250-residue chain is 1-(5-phosphoribosyl)-5-[(5-phosphoribosylamino)methylideneamino] imidazole-4-carboxamide isomerase (250 aa).

The Proton acceptor role is filled by Asp8. Residue Asp129 is the Proton donor of the active site.

It belongs to the HisA/HisF family.

The protein resides in the cytoplasm. The enzyme catalyses 1-(5-phospho-beta-D-ribosyl)-5-[(5-phospho-beta-D-ribosylamino)methylideneamino]imidazole-4-carboxamide = 5-[(5-phospho-1-deoxy-D-ribulos-1-ylimino)methylamino]-1-(5-phospho-beta-D-ribosyl)imidazole-4-carboxamide. Its pathway is amino-acid biosynthesis; L-histidine biosynthesis; L-histidine from 5-phospho-alpha-D-ribose 1-diphosphate: step 4/9. The protein is 1-(5-phosphoribosyl)-5-[(5-phosphoribosylamino)methylideneamino] imidazole-4-carboxamide isomerase of Desulfovibrio desulfuricans (strain ATCC 27774 / DSM 6949 / MB).